The primary structure comprises 475 residues: 3-isopropylmalate dehydratase large subunit (475 aa).

The [4Fe-4S] cluster site is built by Cys353, Cys414, and Cys417.

This sequence belongs to the aconitase/IPM isomerase family. LeuC type 1 subfamily. As to quaternary structure, heterodimer of LeuC and LeuD. [4Fe-4S] cluster is required as a cofactor.

It carries out the reaction (2R,3S)-3-isopropylmalate = (2S)-2-isopropylmalate. It participates in amino-acid biosynthesis; L-leucine biosynthesis; L-leucine from 3-methyl-2-oxobutanoate: step 2/4. In terms of biological role, catalyzes the isomerization between 2-isopropylmalate and 3-isopropylmalate, via the formation of 2-isopropylmaleate. In Stutzerimonas stutzeri (strain A1501) (Pseudomonas stutzeri), this protein is 3-isopropylmalate dehydratase large subunit.